The chain runs to 96 residues: Co-chaperonin GroES (96 aa).

This sequence belongs to the GroES chaperonin family. In terms of assembly, heptamer of 7 subunits arranged in a ring. Interacts with the chaperonin GroEL.

The protein localises to the cytoplasm. In terms of biological role, together with the chaperonin GroEL, plays an essential role in assisting protein folding. The GroEL-GroES system forms a nano-cage that allows encapsulation of the non-native substrate proteins and provides a physical environment optimized to promote and accelerate protein folding. GroES binds to the apical surface of the GroEL ring, thereby capping the opening of the GroEL channel. This chain is Co-chaperonin GroES, found in Herminiimonas arsenicoxydans.